The sequence spans 431 residues: Trigger factor (431 aa).

Positions 158–243 (GDLVAVETWS…VAEVSEPVVP (86 aa)) constitute a PPIase FKBP-type domain.

Belongs to the FKBP-type PPIase family. Tig subfamily.

It localises to the cytoplasm. It carries out the reaction [protein]-peptidylproline (omega=180) = [protein]-peptidylproline (omega=0). Its function is as follows. Involved in protein export. Acts as a chaperone by maintaining the newly synthesized protein in an open conformation. Functions as a peptidyl-prolyl cis-trans isomerase. This is Trigger factor from Stenotrophomonas maltophilia (strain R551-3).